We begin with the raw amino-acid sequence, 332 residues long: MNQSELIRALPKAELHVHIEGTFEPELMFEIAQRNHIDIPYKSVEEIKKAYNFHNLQSFLDIYYAGANVLINEQDFYDLAWAYFKKCAEDRVVHTEMFFDPQTHTERGVSFEIVLNGLKRACKDAKEHLGISSHLIMCFLRHLSEEDAFKTLEQALPYKADIIAVGLDSSEVGHPPSKFARVFEKAREEGFLVVAHAGEEGPPEYVWEALDLLKVNRIDHGVRSEEDPALMQRLIQEKMPLTVCPLSNLKLCVVNDMKEHNIRRLLNQGVHVTVNSDDPSYFGGYMNDNFVAIQAALDLSNEELKKLAINSFEASFIDEEEKQNWIEEINQI.

Residues histidine 16, histidine 18, and histidine 196 each contribute to the Zn(2+) site. Glutamate 199 functions as the Proton donor in the catalytic mechanism. Zn(2+) is bound at residue aspartate 277. Aspartate 278 contributes to the substrate binding site.

This sequence belongs to the metallo-dependent hydrolases superfamily. Adenosine and AMP deaminases family. Adenine deaminase type 2 subfamily. Zn(2+) serves as cofactor.

It catalyses the reaction adenine + H2O + H(+) = hypoxanthine + NH4(+). Its function is as follows. Catalyzes the hydrolytic deamination of adenine to hypoxanthine. Plays an important role in the purine salvage pathway and in nitrogen catabolism. The protein is Adenine deaminase of Acinetobacter baylyi (strain ATCC 33305 / BD413 / ADP1).